Reading from the N-terminus, the 121-residue chain is UPF0102 protein Hhal_2103 (121 aa).

The tract at residues 1-20 (MMAPQTTRNDPRQRGQEAEE) is disordered. The segment covering 9–20 (NDPRQRGQEAEE) has biased composition (basic and acidic residues).

Belongs to the UPF0102 family.

The polypeptide is UPF0102 protein Hhal_2103 (Halorhodospira halophila (strain DSM 244 / SL1) (Ectothiorhodospira halophila (strain DSM 244 / SL1))).